Reading from the N-terminus, the 316-residue chain is MSSTDIWISNDASTFQKAQLPTQLRHVKVIKIREDSIGRIILLISTEITNEENADPDLSEIFISDSQGLKFSPVEWTPNHQFGNFRLTFPDFLKGTIFGSFHPSIDYSNHQVNYTENIAGGETKISVDNGLTWSNLKVVDEENADSFGCDITRPERCSLQGYFYNLKLSNPSAGIILMTGSVGDDNEFDRKDRKTFISRDGGLTWRVAHNSSGLYATGDLGNIIVYIPSPSYKDGDVQSKLYFSLDQGRTWNQYELVDALFYIHPLELINTTPDGSGSKFILSGHLITTASQEGNNTNISYIARSVLYAIDFSAAF.

BNR repeat units follow at residues 62 to 73 (FISDSQGLKFSP), 124 to 135 (KISVDNGLTWSN), 196 to 207 (FISRDGGLTWRV), and 242 to 253 (YFSLDQGRTWNQ).

This is an uncharacterized protein from Saccharomyces cerevisiae (strain ATCC 204508 / S288c) (Baker's yeast).